The following is a 228-amino-acid chain: Translin (228 aa).

Residues 86–90 are DNA/RNA binding; it reads RFHEH. Positions 177–198 are leucine-zipper; sequence LDSGFRLLNLKNDSLRKRYDGL. At K187 the chain carries N6-acetyllysine. S190 bears the Phosphoserine mark. An N6-acetyllysine modification is found at K199.

It belongs to the translin family. As to quaternary structure, ring-shaped heterooctamer of six TSN and two TSNAX subunits, DNA/RNA binding occurs inside the ring.

It localises to the cytoplasm. The protein localises to the nucleus. DNA-binding protein that specifically recognizes consensus sequences at the breakpoint junctions in chromosomal translocations, mostly involving immunoglobulin (Ig)/T-cell receptor gene segments. Seems to recognize single-stranded DNA ends generated by staggered breaks occurring at recombination hot spots. Its function is as follows. Exhibits both single-stranded and double-stranded endoribonuclease activity. May act as an activator of RNA-induced silencing complex (RISC) by facilitating endonucleolytic cleavage of the siRNA passenger strand. This is Translin (TSN) from Cricetulus griseus (Chinese hamster).